Consider the following 315-residue polypeptide: Putative HTH-type transcriptional regulatory protein PH1808 (315 aa).

The HTH cro/C1-type domain occupies 131 to 189 (LKALREEHGYSITELAGILGISRKSLQRYEKGESVVSLEVALRLEEVFDEPLVKPIDVL). Residues 142 to 161 (ITELAGILGISRKSLQRYEK) constitute a DNA-binding region (H-T-H motif).

The protein is Putative HTH-type transcriptional regulatory protein PH1808 of Pyrococcus horikoshii (strain ATCC 700860 / DSM 12428 / JCM 9974 / NBRC 100139 / OT-3).